The chain runs to 340 residues: Peroxisomal adenine nucleotide transporter 1 (340 aa).

3 Solcar repeats span residues 4–119 (ENAV…VRKH), 133–218 (FSTP…LREA), and 236–320 (LSPG…LTKM). 6 helical membrane-spanning segments follow: residues 6-26 (AVIG…LDLA), 96-116 (GSST…YTLV), 139-159 (LVLG…INVV), 190-210 (GFWA…ITYA), 242-262 (FVMG…LIIA), and 293-313 (WKGL…LFMF).

This sequence belongs to the mitochondrial carrier (TC 2.A.29) family.

It is found in the peroxisome membrane. Adenine nucleotide transporter involved in the uniport of ATP and adenine nucleotide hetero-exchange transport between the cytosol and the peroxisomal lumen. This transport is accompanied by a proton transport from the peroxisomal lumen to the cytosol. Transport of ATP into the peroxisome is required for beta-oxidation of medium-chain fatty acids. This is Peroxisomal adenine nucleotide transporter 1 (ANT1) from Eremothecium gossypii (strain ATCC 10895 / CBS 109.51 / FGSC 9923 / NRRL Y-1056) (Yeast).